The sequence spans 508 residues: Phosphoglycerate kinase A (508 aa).

(2R)-3-phosphoglycerate contacts are provided by valine 32, aspartate 33, phenylalanine 34, asparagine 35, arginine 48, serine 70, histidine 71, glycine 73, arginine 74, arginine 224, histidine 260, and arginine 261. Residues glycine 306 and alanine 307 each coordinate ADP. Position 306 (glycine 306) interacts with CDP. 2 residues coordinate AMP: alanine 307 and lysine 308. Alanine 307 is an ATP binding site. Residue alanine 307 coordinates Mg(2+). Lysine 308 contributes to the (2R)-3-phosphoglycerate binding site. Glutamate 311 contributes to the CDP binding site. Glutamate 311 is a Mg(2+) binding site. ADP contacts are provided by lysine 312 and glycine 330. AMP is bound at residue lysine 312. Lysine 312 serves as a coordination point for ATP. CDP is bound at residue glycine 330. Positions 331 and 403 each coordinate AMP. 2 residues coordinate ATP: alanine 331 and alanine 403. The ADP site is built by alanine 403 and asparagine 427. Residues glycine 428 and phenylalanine 433 each coordinate CDP. Phenylalanine 433, glutamate 434, glutamate 466, and serine 467 together coordinate ADP. AMP is bound at residue glutamate 434. ATP contacts are provided by glutamate 434, glutamate 466, and serine 467. Glutamate 466 is a Mg(2+) binding site.

The protein belongs to the phosphoglycerate kinase family. As to quaternary structure, monomer. Requires Mg(2+) as cofactor.

It carries out the reaction (2R)-3-phosphoglycerate + ATP = (2R)-3-phospho-glyceroyl phosphate + ADP. The protein operates within carbohydrate degradation; glycolysis; pyruvate from D-glyceraldehyde 3-phosphate: step 2/5. This chain is Phosphoglycerate kinase A, found in Trypanosoma brucei brucei.